The following is a 783-amino-acid chain: MNLERSERIEIPVLPLRDVVVYPHMVIPLFVGREKSISCLETAMETNKQVLLVAQKQADTDEPTVDDLFEVGTVATILQLLKLPDGTVKVLVEGQQRAKINHFKESDFFLAEAEFIVTPELDEREQEVIVRSAINQFEGFIKLNKKIPPEVLTSLNGIDEAARLADTIAAHMPLKLVDKQQVLEIIDVTERLEFLMGQMESEIDLLQVEKRIRGRVKKQMEKSQREYYLNEQMKAIQKELGEMEDAPDEFETLQKKIDESKMPQEAREKTEQELQKLKMMSPMSAEATVVRSYIDWMVSVPWTKRSKVKKNLAKAEEILNEDHYGLERVKERILEYLAVQNRINKLKGPILCLVGPPGVGKTSLGRSIASATGRKYVRMALGGVRDEAEIRGHRRTYIGSLPGKLIQKMSKVGVKNPLFLLDEIDKMSSDMRGDPASALLEVLDPEQNNSFNDHYLEVDYDLSDVMFVATSNSMNIPGPLLDRMEVIRLSGYTEDEKLNIAKRHLVEKQVQRNGLKPNEIVIEDSAIIGIIRYYTREAGVRGLEREISKICRKAVKNILLDKDIKSVTVTMDNLKEYLGVQRFDYGKADESNRIGQVTGLAWTEVGGDLLTIETQSMPGKGKLTQTGSLGDVMQESIQAAMTVVRSRADKLGINSDFYEKKDIHVHVPEGATPKDGPSAGTAMCTALVSALTGNPVKAEVAMTGEITLRGEVLPIGGLKEKLLAAHRGGIKTVLIPKDNERDLEEIPENVIADLQVIPVQWIDEVLKVALERDPTGVEFEAKK.

The Lon N-terminal domain maps to 11-203 (IPVLPLRDVV…FLMGQMESEI (193 aa)). An ATP-binding site is contributed by 355–362 (GPPGVGKT). In terms of domain architecture, Lon proteolytic spans 591–772 (SNRIGQVTGL…DEVLKVALER (182 aa)). Active-site residues include S678 and K721.

It belongs to the peptidase S16 family. In terms of assembly, homohexamer. Organized in a ring with a central cavity.

It is found in the cytoplasm. The enzyme catalyses Hydrolysis of proteins in presence of ATP.. Its function is as follows. ATP-dependent serine protease that mediates the selective degradation of mutant and abnormal proteins as well as certain short-lived regulatory proteins. Required for cellular homeostasis and for survival from DNA damage and developmental changes induced by stress. Degrades polypeptides processively to yield small peptide fragments that are 5 to 10 amino acids long. Binds to DNA in a double-stranded, site-specific manner. Regulates swarmer cell differentiation of V.parahaemolyticus. The chain is Lon protease from Vibrio parahaemolyticus serotype O3:K6 (strain RIMD 2210633).